We begin with the raw amino-acid sequence, 241 residues long: Lysoplasmalogenase TMEM86A (241 aa).

Residues 1–13 are Cytoplasmic-facing; that stretch reads MVSPVTVVKSEGP. Residues 14–30 form a helical membrane-spanning segment; the sequence is KLVPFFKATCVYFVLWL. The Extracellular segment spans residues 31 to 36; that stretch reads PSSSPS. A helical membrane pass occupies residues 37–59; sequence WVSALIKCLPIFCLWLFLLAHGV. Residues 60-67 are Cytoplasmic-facing; sequence RFLLAHPS. A helical membrane pass occupies residues 68 to 87; it reads ASLIFVGLVFSAVGDAFLIW. The Extracellular portion of the chain corresponds to 88–96; the sequence is QDHGYFEHG. The helical transmembrane segment at 97-113 threads the bilayer; it reads LLMFAVAHILYAAAFGM. Topologically, residues 114–119 are cytoplasmic; it reads RPLALR. The helical transmembrane segment at 120-136 threads the bilayer; sequence TGLVIGVLSGLCYALLY. The Extracellular portion of the chain corresponds to 137 to 142; it reads PGLSGA. Residues 143–159 form a helical membrane-spanning segment; sequence FTYLVGVYVALISFMGW. Residues 160 to 176 lie on the Cytoplasmic side of the membrane; sequence RAMAGLRLVGAAWRWTE. A helical membrane pass occupies residues 177-195; it reads LAAGGGALLFILSDLTIAL. Topologically, residues 196 to 206 are extracellular; that stretch reads NKFCFPVPYSR. A helical membrane pass occupies residues 207-225; that stretch reads ALIMSTYYAAQMLIALSAV. Residues 226–241 are Cytoplasmic-facing; sequence ESREPVGEDYRLSKAD.

It belongs to the TMEM86 family. In terms of tissue distribution, highly expressed in the jejunum, white adipose tissue, kidney and macrophages.

The protein localises to the endoplasmic reticulum membrane. It catalyses the reaction a 1-O-(1Z-alkenyl)-sn-glycero-3-phosphocholine + H2O = a 2,3-saturated aldehyde + sn-glycerol 3-phosphocholine. It carries out the reaction a 1-O-(1Z-alkenyl)-sn-glycero-3-phosphoethanolamine + H2O = a 2,3-saturated aldehyde + sn-glycero-3-phosphoethanolamine. Functionally, catalyzes the hydrolysis of the vinyl ether bond of choline or ethanolamine lysoplasmalogens, forming fatty aldehyde and glycerophosphocholine or glycerophosphoethanolamine, respectively and is specific for the sn-2-deacylated (lyso) form of plasmalogen. Plays an important role in lysoplasmalogen metabolism in the adipocyte tissue and macrophages. The polypeptide is Lysoplasmalogenase TMEM86A (Tmem86a) (Mus musculus (Mouse)).